The primary structure comprises 94 residues: MARSLKKGPFIDDHLLKKVDEMNEKGEKKVFKTWSRRSTIFPQMIGHTIAVYDGRKHIPVYITEDMVGHKLGEFAPTRTYRGHADKSERSTGLK.

Belongs to the universal ribosomal protein uS19 family.

Its function is as follows. Protein S19 forms a complex with S13 that binds strongly to the 16S ribosomal RNA. This is Small ribosomal subunit protein uS19 from Desulforamulus reducens (strain ATCC BAA-1160 / DSM 100696 / MI-1) (Desulfotomaculum reducens).